The sequence spans 180 residues: dCTP deaminase, dUMP-forming (180 aa).

DCTP contacts are provided by residues 100–105 (RSSLGR), Asp117, 125–127 (TLE), Gln146, Tyr160, and Gln167. The active-site Proton donor/acceptor is the Glu127.

The protein belongs to the dCTP deaminase family. In terms of assembly, homotrimer.

The catalysed reaction is dCTP + 2 H2O = dUMP + NH4(+) + diphosphate. Its pathway is pyrimidine metabolism; dUMP biosynthesis; dUMP from dCTP: step 1/1. Functionally, bifunctional enzyme that catalyzes both the deamination of dCTP to dUTP and the hydrolysis of dUTP to dUMP without releasing the toxic dUTP intermediate. The polypeptide is dCTP deaminase, dUMP-forming (Persephonella marina (strain DSM 14350 / EX-H1)).